A 227-amino-acid polypeptide reads, in one-letter code: Probable GTP-binding protein EngB (227 aa).

One can recognise an EngB-type G domain in the interval 41–216 (GRPEVAFAGR…RAEIARFAVP (176 aa)). GTP contacts are provided by residues 49 to 56 (GRSNVGKS), 76 to 80 (GRTKQ), 94 to 97 (DMPG), 161 to 164 (TKCD), and 195 to 197 (TSS). Mg(2+) is bound by residues Ser-56 and Thr-78.

Belongs to the TRAFAC class TrmE-Era-EngA-EngB-Septin-like GTPase superfamily. EngB GTPase family. Mg(2+) is required as a cofactor.

Necessary for normal cell division and for the maintenance of normal septation. This Gluconobacter oxydans (strain 621H) (Gluconobacter suboxydans) protein is Probable GTP-binding protein EngB.